A 103-amino-acid polypeptide reads, in one-letter code: MQNQRIRIRLKGFDHRLIDQSTAEIVETAKRTGAQVRGPIPLPTRKERFTVLISPHVNKDARDQYELRTHKRLVDIVEPTEKTVDALMRLDLAAGVDVQISLG.

It belongs to the universal ribosomal protein uS10 family. In terms of assembly, part of the 30S ribosomal subunit.

In terms of biological role, involved in the binding of tRNA to the ribosomes. The chain is Small ribosomal subunit protein uS10 from Shewanella amazonensis (strain ATCC BAA-1098 / SB2B).